Here is a 790-residue protein sequence, read N- to C-terminus: LPS-assembly protein LptD (790 aa).

The signal sequence occupies residues 1-20 (MRMLRWLILSAFSVAGAVQA).

This sequence belongs to the LptD family. Component of the lipopolysaccharide transport and assembly complex. Interacts with LptE and LptA.

Its subcellular location is the cell outer membrane. In terms of biological role, together with LptE, is involved in the assembly of lipopolysaccharide (LPS) at the surface of the outer membrane. The protein is LPS-assembly protein LptD of Bordetella pertussis (strain Tohama I / ATCC BAA-589 / NCTC 13251).